The primary structure comprises 233 residues: Large ribosomal subunit protein uL1 (233 aa).

This sequence belongs to the universal ribosomal protein uL1 family. In terms of assembly, part of the 50S ribosomal subunit.

Binds directly to 23S rRNA. The L1 stalk is quite mobile in the ribosome, and is involved in E site tRNA release. Its function is as follows. Protein L1 is also a translational repressor protein, it controls the translation of the L11 operon by binding to its mRNA. The polypeptide is Large ribosomal subunit protein uL1 (Proteus vulgaris).